Reading from the N-terminus, the 520-residue chain is Amine oxidase [flavin-containing] B (520 aa).

Ser2 bears the N-acetylserine mark. At 2 to 489 (SNKSDVIVVG…TFLERHLPSV (488 aa)) the chain is on the cytoplasmic side. Lys52 and Lys248 each carry N6-acetyllysine. Cys397 is modified (S-8alpha-FAD cysteine). A helical; Anchor for type IV membrane protein membrane pass occupies residues 490–516 (PGLLKLFGLTTILSATALGFLAHKRGL). Residues 517–520 (FVHF) lie on the Mitochondrial intermembrane side of the membrane.

It belongs to the flavin monoamine oxidase family. Monomer, homo- or heterodimer (containing two subunits of similar size). Each subunit contains a covalently bound flavin. Enzymatically active as monomer. Requires FAD as cofactor.

It is found in the mitochondrion outer membrane. The catalysed reaction is a secondary aliphatic amine + O2 + H2O = a primary amine + an aldehyde + H2O2. It carries out the reaction (R)-adrenaline + O2 + H2O = (R)-3,4-dihydroxymandelaldehyde + methylamine + H2O2. The enzyme catalyses a primary methyl amine + O2 + H2O = an aldehyde + H2O2 + NH4(+). It catalyses the reaction benzylamine + O2 + H2O = benzaldehyde + H2O2 + NH4(+). The catalysed reaction is dopamine + O2 + H2O = 3,4-dihydroxyphenylacetaldehyde + H2O2 + NH4(+). It carries out the reaction tyramine + O2 + H2O = (4-hydroxyphenyl)acetaldehyde + H2O2 + NH4(+). The enzyme catalyses (R)-noradrenaline + O2 + H2O = (R)-3,4-dihydroxymandelaldehyde + H2O2 + NH4(+). It catalyses the reaction 2-phenylethylamine + O2 + H2O = 2-phenylacetaldehyde + H2O2 + NH4(+). The catalysed reaction is N-acetylputrescine + O2 + H2O = 4-acetamidobutanal + H2O2 + NH4(+). Its function is as follows. Catalyzes the oxidative deamination of primary and some secondary amines such as neurotransmitters, and exogenous amines including the tertiary amine, neurotoxin 1-methyl-4-phenyl-1,2,3,6-tetrahydropyridine (MPTP), with concomitant reduction of oxygen to hydrogen peroxide and participates in the metabolism of neuroactive and vasoactive amines in the central nervous system and peripheral tissues. Preferentially degrades benzylamine and phenylethylamine. The protein is Amine oxidase [flavin-containing] B of Mus musculus (Mouse).